Reading from the N-terminus, the 533-residue chain is Ribonuclease III domain-containing protein RNC1, chloroplastic (533 aa).

The transit peptide at 1–30 (MAPPAMAFQALALGPLPLPLPAARRRRRVR) directs the protein to the chloroplast. 2 disordered regions span residues 31–57 (VLAV…NSPS) and 66–85 (RKKA…ILKP). Positions 39-53 (TPPPPPSPSSPPEPA) are enriched in pro residues. Residues 69 to 82 (AVSPKKKHPPRRFI) show a composition bias toward basic residues. 2 consecutive RNase III domains span residues 164-279 (LLYL…LCFG) and 411-511 (EHPR…CVYG).

Interacts with RNA. Part of large ribonucleo-protein particles that contain CAF1 and/or CAF2.

It is found in the plastid. Its subcellular location is the chloroplast. Functionally, binds specific group II introns in chloroplasts and facilitates their splicing. Acts on both subgroup IIA and subgroup IIB introns. The substrates of the subgroup II also require the CRM domain proteins CAF1 or CAF2. Binds both single-stranded and double-stranded RNA non-specifically, but lacks endonuclease activity. Required for plastid ribosome biogenesis. The sequence is that of Ribonuclease III domain-containing protein RNC1, chloroplastic from Oryza sativa subsp. japonica (Rice).